A 74-amino-acid chain; its full sequence is MNSETLDVTGLKCPLPILRAKKALAQMQQGDVLTVLATDGGAPGDFEAFCRQTGHVLLDASEQDGVFTLVVQHK.

The Cysteine persulfide intermediate role is filled by cysteine 13.

Belongs to the sulfur carrier protein TusA family.

The protein is Putative sulfur carrier protein NMA0882 of Neisseria meningitidis serogroup A / serotype 4A (strain DSM 15465 / Z2491).